Consider the following 237-residue polypeptide: Putative HTH-type transcriptional regulator ycf28 (237 aa).

The region spanning 155-228 is the HTH crp-type domain; the sequence is KSITNRLISL…KKKVIIHDPI (74 aa). Positions 188-207 form a DNA-binding region, H-T-H motif; sequence HKVLAQIIGSNRVSITRIIS.

It is found in the plastid. The protein localises to the chloroplast. The protein is Putative HTH-type transcriptional regulator ycf28 (ycf28) of Porphyra purpurea (Red seaweed).